The chain runs to 274 residues: Shikimate dehydrogenase (NADP(+)) (274 aa).

Shikimate contacts are provided by residues 15 to 17 and T62; that span reads SKS. The Proton acceptor role is filled by K66. D78 contacts NADP(+). Shikimate contacts are provided by N87 and D102. Residues 127–131 and M215 contribute to the NADP(+) site; that span reads GAGGA. Y217 lines the shikimate pocket. G239 is an NADP(+) binding site.

It belongs to the shikimate dehydrogenase family. Homodimer.

It carries out the reaction shikimate + NADP(+) = 3-dehydroshikimate + NADPH + H(+). It functions in the pathway metabolic intermediate biosynthesis; chorismate biosynthesis; chorismate from D-erythrose 4-phosphate and phosphoenolpyruvate: step 4/7. Its function is as follows. Involved in the biosynthesis of the chorismate, which leads to the biosynthesis of aromatic amino acids. Catalyzes the reversible NADPH linked reduction of 3-dehydroshikimate (DHSA) to yield shikimate (SA). In Dechloromonas aromatica (strain RCB), this protein is Shikimate dehydrogenase (NADP(+)).